A 117-amino-acid polypeptide reads, in one-letter code: G antigen 12I (117 aa).

The disordered stretch occupies residues 1–117; it reads MSWRGRSTYY…PEEGEKQSQC (117 aa). 2 stretches are compositionally biased toward acidic residues: residues 32 to 45 and 87 to 96; these read FSDEVEPATPEEGE and ECEDGPDGQE. Residues 103 to 117 show a composition bias toward basic and acidic residues; it reads EEVKTPEEGEKQSQC.

It belongs to the GAGE family. In terms of assembly, forms tetramers.

This chain is G antigen 12I (GAGE12I), found in Homo sapiens (Human).